The chain runs to 105 residues: Malonate decarboxylase acyl carrier protein (105 aa).

O-(phosphoribosyl dephospho-coenzyme A)serine is present on Ser-28.

It belongs to the MdcC family. Post-translationally, covalently binds the prosthetic group of malonate decarboxylase.

It is found in the cytoplasm. Functionally, subunit of malonate decarboxylase, it is an acyl carrier protein to which acetyl and malonyl thioester residues are bound via a 2'-(5''-phosphoribosyl)-3'-dephospho-CoA prosthetic group and turn over during the catalytic mechanism. In Xanthomonas axonopodis pv. citri (strain 306), this protein is Malonate decarboxylase acyl carrier protein.